Here is a 533-residue protein sequence, read N- to C-terminus: Multicopy suppressor of sporulation protein msa1 (533 aa).

Positions aspartate 30–leucine 68 are disordered. Residues leucine 36–phenylalanine 45 show a composition bias toward polar residues. Low complexity predominate over residues serine 54–leucine 68. The 80-residue stretch at alanine 79–valine 158 folds into the RRM 1 domain. Residues tyrosine 237–alanine 292 are disordered. The segment covering serine 277–alanine 292 has biased composition (polar residues). The RRM 2 domain occupies tyrosine 365–leucine 441.

Its subcellular location is the cytoplasm. Functionally, negative regulator of sexual differentiation. Acts by repressing the transcription of meiosis-inducing, ste11-regulated genes. In Schizosaccharomyces pombe (strain 972 / ATCC 24843) (Fission yeast), this protein is Multicopy suppressor of sporulation protein msa1 (msa1).